Consider the following 108-residue polypeptide: ATP-dependent Clp protease adapter protein ClpS (108 aa).

The segment covering 1 to 10 (MADSDKHGDE) has biased composition (basic and acidic residues). Residues 1–21 (MADSDKHGDEGPSTGVVVKAK) form a disordered region.

It belongs to the ClpS family. Binds to the N-terminal domain of the chaperone ClpA.

Involved in the modulation of the specificity of the ClpAP-mediated ATP-dependent protein degradation. The sequence is that of ATP-dependent Clp protease adapter protein ClpS from Rhodospirillum centenum (strain ATCC 51521 / SW).